Consider the following 446-residue polypeptide: tRNA-2-methylthio-N(6)-dimethylallyladenosine synthase (446 aa).

One can recognise an MTTase N-terminal domain in the interval 8–124; the sequence is KTYRVKSFGC…LPGMIDAAVA (117 aa). [4Fe-4S] cluster-binding residues include Cys-17, Cys-53, Cys-87, Cys-160, Cys-164, and Cys-167. The Radical SAM core domain occupies 146 to 378; that stretch reads RKSAPSAFLT…QAALNRDQAA (233 aa). The 62-residue stretch at 381–442 folds into the TRAM domain; sequence AGSVGRTCEV…PNSLAGQLLE (62 aa).

This sequence belongs to the methylthiotransferase family. MiaB subfamily. As to quaternary structure, monomer. [4Fe-4S] cluster serves as cofactor.

It localises to the cytoplasm. The catalysed reaction is N(6)-dimethylallyladenosine(37) in tRNA + (sulfur carrier)-SH + AH2 + 2 S-adenosyl-L-methionine = 2-methylsulfanyl-N(6)-dimethylallyladenosine(37) in tRNA + (sulfur carrier)-H + 5'-deoxyadenosine + L-methionine + A + S-adenosyl-L-homocysteine + 2 H(+). Functionally, catalyzes the methylthiolation of N6-(dimethylallyl)adenosine (i(6)A), leading to the formation of 2-methylthio-N6-(dimethylallyl)adenosine (ms(2)i(6)A) at position 37 in tRNAs that read codons beginning with uridine. This is tRNA-2-methylthio-N(6)-dimethylallyladenosine synthase from Erythrobacter litoralis (strain HTCC2594).